Consider the following 412-residue polypeptide: CCA-adding enzyme (412 aa).

Ser-41 and Lys-44 together coordinate ATP. Ser-41 and Lys-44 together coordinate CTP. Mg(2+) is bound by residues Asp-53, Asp-55, and Asp-106. His-129, Lys-149, and Tyr-158 together coordinate ATP. CTP contacts are provided by His-129, Lys-149, and Tyr-158.

The protein belongs to the tRNA nucleotidyltransferase/poly(A) polymerase family. Archaeal CCA-adding enzyme subfamily. Homodimer. Mg(2+) serves as cofactor.

The catalysed reaction is a tRNA precursor + 2 CTP + ATP = a tRNA with a 3' CCA end + 3 diphosphate. It carries out the reaction a tRNA with a 3' CCA end + 2 CTP + ATP = a tRNA with a 3' CCACCA end + 3 diphosphate. Functionally, catalyzes the addition and repair of the essential 3'-terminal CCA sequence in tRNAs without using a nucleic acid template. Adds these three nucleotides in the order of C, C, and A to the tRNA nucleotide-73, using CTP and ATP as substrates and producing inorganic pyrophosphate. tRNA 3'-terminal CCA addition is required both for tRNA processing and repair. Also involved in tRNA surveillance by mediating tandem CCA addition to generate a CCACCA at the 3' terminus of unstable tRNAs. While stable tRNAs receive only 3'-terminal CCA, unstable tRNAs are marked with CCACCA and rapidly degraded. The sequence is that of CCA-adding enzyme from Saccharolobus islandicus (strain Y.N.15.51 / Yellowstone #2) (Sulfolobus islandicus).